The following is a 153-amino-acid chain: Small ribosomal subunit protein uS15 (153 aa).

It belongs to the universal ribosomal protein uS15 family. As to quaternary structure, part of the 30S ribosomal subunit.

The protein is Small ribosomal subunit protein uS15 of Sulfolobus acidocaldarius (strain ATCC 33909 / DSM 639 / JCM 8929 / NBRC 15157 / NCIMB 11770).